The following is a 178-amino-acid chain: MSRIGKQPVSIPDKVKVSVKDGTVFVEGPKGRVQKTFAPAVKVTVADKQVTFAPTEESRFAKAMYGTARSIVAGMVKGVTEGYTKDLEIQGVGFKANLKGKQLDLALGYSHPILLDIPEGIKITVTDQTKVRVEGADKQLVGAVTAEIRGYYPPEPYKGKGVRIVGERVRRKEGKTVA.

This sequence belongs to the universal ribosomal protein uL6 family. As to quaternary structure, part of the 50S ribosomal subunit.

Its function is as follows. This protein binds to the 23S rRNA, and is important in its secondary structure. It is located near the subunit interface in the base of the L7/L12 stalk, and near the tRNA binding site of the peptidyltransferase center. In Opitutus terrae (strain DSM 11246 / JCM 15787 / PB90-1), this protein is Large ribosomal subunit protein uL6.